Here is a 100-residue protein sequence, read N- to C-terminus: Apolipoprotein C-II (100 aa).

Residues 1–22 form the signal peptide; sequence MGSRFLLALFLVLLVLGYEVQG. A lipid binding region spans residues 66-74; it reads SVDEKLRDM. Residues 78-100 are lipoprotein lipase cofactor; sequence SSAAVSTYAGIFTDQILTLLKGE.

The protein belongs to the apolipoprotein C2 family. In terms of processing, proapolipoprotein C-II is synthesized as a sialic acid containing glycoprotein which is subsequently desialylated prior to its proteolytic processing. Proapolipoprotein C-II, the major form found in plasma undergoes proteolytic cleavage of its N-terminal hexapeptide to generate the mature form apolipoprotein C-II, which occurs as the minor form in plasma.

The protein localises to the secreted. In terms of biological role, component of chylomicrons, very low-density lipoproteins (VLDL), low-density lipoproteins (LDL), and high-density lipoproteins (HDL) in plasma. Plays an important role in lipoprotein metabolism as an activator of lipoprotein lipase. The chain is Apolipoprotein C-II (Apoc2) from Neotoma lepida (Desert woodrat).